The chain runs to 187 residues: Ribosome-recycling factor (187 aa).

The protein belongs to the RRF family.

The protein resides in the cytoplasm. In terms of biological role, responsible for the release of ribosomes from messenger RNA at the termination of protein biosynthesis. May increase the efficiency of translation by recycling ribosomes from one round of translation to another. In Ligilactobacillus salivarius (strain UCC118) (Lactobacillus salivarius), this protein is Ribosome-recycling factor.